The chain runs to 331 residues: ADP-L-glycero-D-manno-heptose-6-epimerase (331 aa).

NADP(+) is bound by residues 11–12 (FI), 32–33 (DN), K39, K54, 75–79 (LGACT), and N92. Y139 (proton acceptor) is an active-site residue. An NADP(+)-binding site is contributed by K143. N168 contributes to the substrate binding site. 2 residues coordinate NADP(+): V169 and K177. K177 serves as the catalytic Proton acceptor. Residues R179, Q186, 200 to 203 (FGEH), H213, and Y292 contribute to the substrate site.

The protein belongs to the NAD(P)-dependent epimerase/dehydratase family. HldD subfamily. Homopentamer. NADP(+) serves as cofactor.

The catalysed reaction is ADP-D-glycero-beta-D-manno-heptose = ADP-L-glycero-beta-D-manno-heptose. Its pathway is nucleotide-sugar biosynthesis; ADP-L-glycero-beta-D-manno-heptose biosynthesis; ADP-L-glycero-beta-D-manno-heptose from D-glycero-beta-D-manno-heptose 7-phosphate: step 4/4. Catalyzes the interconversion between ADP-D-glycero-beta-D-manno-heptose and ADP-L-glycero-beta-D-manno-heptose via an epimerization at carbon 6 of the heptose. In Cupriavidus pinatubonensis (strain JMP 134 / LMG 1197) (Cupriavidus necator (strain JMP 134)), this protein is ADP-L-glycero-D-manno-heptose-6-epimerase.